The sequence spans 290 residues: NAD kinase (290 aa).

Catalysis depends on Asp-72, which acts as the Proton acceptor. Residues 72 to 73, Lys-77, 145 to 146, Asp-175, 186 to 191, and Ala-210 contribute to the NAD(+) site; these read DG, NE, and TAYSLS.

The protein belongs to the NAD kinase family. It depends on a divalent metal cation as a cofactor.

Its subcellular location is the cytoplasm. The catalysed reaction is NAD(+) + ATP = ADP + NADP(+) + H(+). Functionally, involved in the regulation of the intracellular balance of NAD and NADP, and is a key enzyme in the biosynthesis of NADP. Catalyzes specifically the phosphorylation on 2'-hydroxyl of the adenosine moiety of NAD to yield NADP. In Bacteroides fragilis (strain ATCC 25285 / DSM 2151 / CCUG 4856 / JCM 11019 / LMG 10263 / NCTC 9343 / Onslow / VPI 2553 / EN-2), this protein is NAD kinase.